Here is a 305-residue protein sequence, read N- to C-terminus: RNA-binding protein rnp-1 (305 aa).

Residues 3–72 (SKLFVGNLPD…KVVNIKKSTS (70 aa)) form the RRM domain. Residues 84 to 97 (CFRCQSDEHRTPQC) form a CCHC-type zinc finger. The tract at residues 284–305 (QQIQHQQATGSPAPVPAPPRLY) is disordered. The segment covering 296-305 (APVPAPPRLY) has biased composition (pro residues).

As to expression, expressed throughout the germline.

RNA-binding protein that is required for the germ line to transition from spermatogenesis to oogenesis and allow for normal oocyte development. The polypeptide is RNA-binding protein rnp-1 (Caenorhabditis elegans).